A 634-amino-acid chain; its full sequence is Probable potassium transport system protein Kup 2 (634 aa).

Transmembrane regions (helical) follow at residues 15–35, 55–75, 101–121, 142–162, 173–193, 208–228, 252–272, 303–323, 351–371, 381–401, 408–428, and 435–455; these read LTLG…LYAF, VLSL…VIFL, WVAV…DAII, GMSQ…LFMF, LFGP…LWHI, AVTF…AVFL, WLSF…ALAL, LVIL…TGAY, IYMP…VLGF, YGIA…LIAW, PVWT…FFGA, and EGGW…FTWL.

The protein belongs to the HAK/KUP transporter (TC 2.A.72) family.

Its subcellular location is the cell inner membrane. The catalysed reaction is K(+)(in) + H(+)(in) = K(+)(out) + H(+)(out). In terms of biological role, transport of potassium into the cell. Likely operates as a K(+):H(+) symporter. This Novosphingobium aromaticivorans (strain ATCC 700278 / DSM 12444 / CCUG 56034 / CIP 105152 / NBRC 16084 / F199) protein is Probable potassium transport system protein Kup 2.